Reading from the N-terminus, the 34-residue chain is Egg-releasing peptide (34 aa).

The protein is Egg-releasing peptide of Aplysia californica (California sea hare).